A 241-amino-acid chain; its full sequence is Adenosylcobinamide-GDP ribazoletransferase (241 aa).

A run of 4 helical transmembrane segments spans residues 34-54 (LGLPAVGLVSGLLAGVVAWAF), 108-128 (VGGLAIGSMALLLAVASFGWI), 184-206 (LPFSPVATLTCAVCSAVVAWTCL), and 220-240 (FLGASIWVSRVLSAVCLSSLP).

Belongs to the CobS family. Mg(2+) serves as cofactor.

Its subcellular location is the cell membrane. It carries out the reaction alpha-ribazole + adenosylcob(III)inamide-GDP = adenosylcob(III)alamin + GMP + H(+). The enzyme catalyses alpha-ribazole 5'-phosphate + adenosylcob(III)inamide-GDP = adenosylcob(III)alamin 5'-phosphate + GMP + H(+). The protein operates within cofactor biosynthesis; adenosylcobalamin biosynthesis; adenosylcobalamin from cob(II)yrinate a,c-diamide: step 7/7. Joins adenosylcobinamide-GDP and alpha-ribazole to generate adenosylcobalamin (Ado-cobalamin). Also synthesizes adenosylcobalamin 5'-phosphate from adenosylcobinamide-GDP and alpha-ribazole 5'-phosphate. The polypeptide is Adenosylcobinamide-GDP ribazoletransferase (Methanopyrus kandleri (strain AV19 / DSM 6324 / JCM 9639 / NBRC 100938)).